The primary structure comprises 131 residues: Spermatocyte protein spe-27 (131 aa).

The signal sequence occupies residues 1 to 17; it reads MNKSLIFLLSFAYSCYS.

Functionally, required for spermiogenesis. The sequence is that of Spermatocyte protein spe-27 (spe-27) from Caenorhabditis elegans.